The sequence spans 299 residues: pH-regulated antigen PRA1 (299 aa).

The signal sequence occupies residues 1–15 (MNYLLFCLFFAFSVA). 4 N-linked (GlcNAc...) asparagine glycosylation sites follow: N48, N89, N135, and N208. The tract at residues 253-299 (FEDSDSGSDSGASSTASSSHQHTDSNPSATTDANSHCHTHADGEVHC) is disordered. A compositionally biased stretch (low complexity) spans 259–272 (GSDSGASSTASSSH). Residues 278 to 288 (NPSATTDANSH) are compositionally biased toward polar residues.

It belongs to the ZPS1 family. Component of a multiprotein complex of 250 kDa composed of at least HYR1, MP65, and PRA1. Interacts with host Integrin alpha-M/beta-2 heterodimer. Also binds human factor H (CFH), CFHR1, plasminogen (PLG), complement C3, and C4BPA. Interacts with ZRT101. N- and O-glycosylated. The N- and 0-glycosidically linked carbohydrates represent 18 to 20 percent and 3 to 4 percent, respectively, of the molecular mass of PRA1. 0-linked sugar residues may be involved in the interaction with fibrinogen. Contributes highly to the carbohydrate component of the matrix. Treatment with tunicamycin impairs glycosylation.

The protein resides in the secreted. Cell surface protein involved in the host-parasite interaction during candidal infection. With MP65, represents a major component of the biofilm matrix. As a surface protein, binds the two human complement regulators CFH and CFHR1, as well as plasminogen PLG, mediates complement evasion and extra-cellular matrix interaction and/or degradation. As a released protein, enhances complement control in direct vicinity of the yeast and thus generates an additional protective layer which controls host complement attack, assisting the fungus in escaping host surveillance. Binds to host fluid-phase C3 and blocks cleavage of C3 to C3a and C3b, leading to inhibition of complement activation and protection from uptake of C.albicans by human macrophages. Also mediates human complement control and complement evasion through binding to C4BPA, another human complement inhibitor, as well as through binding to host integrin alpha-M/beta-2. Binds zinc from its environment and then reassociates with ZRT1 to acquire this essential metal. The protein is pH-regulated antigen PRA1 of Candida albicans (strain SC5314 / ATCC MYA-2876) (Yeast).